Consider the following 502-residue polypeptide: CBL-interacting protein kinase 11 (502 aa).

In terms of domain architecture, Protein kinase spans Y12–Y267. ATP is bound by residues L18–V26 and K41. Catalysis depends on D135, which acts as the Proton acceptor. The segment at D153–E182 is activation loop. The NAF domain occupies A297–E333. The tract at residues Q339 to V367 is PPI. A disordered region spans residues L447–N502. Low complexity predominate over residues P461 to Q472. A compositionally biased stretch (polar residues) spans T493–N502.

Belongs to the protein kinase superfamily. CAMK Ser/Thr protein kinase family. SNF1 subfamily. Requires Mn(2+) as cofactor.

The enzyme catalyses L-seryl-[protein] + ATP = O-phospho-L-seryl-[protein] + ADP + H(+). The catalysed reaction is L-threonyl-[protein] + ATP = O-phospho-L-threonyl-[protein] + ADP + H(+). In terms of biological role, CIPK serine-threonine protein kinases interact with CBL proteins. Binding of a CBL protein to the regulatory NAF domain of CIPK protein lead to the activation of the kinase in a calcium-dependent manner. The chain is CBL-interacting protein kinase 11 (CIPK11) from Oryza sativa subsp. japonica (Rice).